Consider the following 416-residue polypeptide: Squalene synthase (416 aa).

Transmembrane regions (helical) follow at residues 285–304 and 386–406; these read VINF…NACY and FISY…FLIA.

It belongs to the phytoene/squalene synthase family. The cofactor is Mg(2+).

The protein resides in the endoplasmic reticulum membrane. It carries out the reaction 2 (2E,6E)-farnesyl diphosphate + NADPH + H(+) = squalene + 2 diphosphate + NADP(+). It catalyses the reaction 2 (2E,6E)-farnesyl diphosphate + NADH + H(+) = squalene + 2 diphosphate + NAD(+). It participates in terpene metabolism; lanosterol biosynthesis; lanosterol from farnesyl diphosphate: step 1/3. This Dictyostelium discoideum (Social amoeba) protein is Squalene synthase (fdfT).